Reading from the N-terminus, the 315-residue chain is MAIQIVLIVGPTATGKSRLAVDVAKRFNGEVVSADSMQIYKYMDIGTAKITKEEMQGIPHHMIDIVEPNEEFSVAEYEKRAKAIIKDIHERGKLPIIVGGTGLYINSIVYIMHFSDFEGSKEFREKMKKLAETYGTSYLYEKLKEVDPEAARKIHPNDLRRIIRALEVYEFTGKPISHYQKMSGMRKNPEYDPIMIGLNYKNRQLLYEKINRRVDEMIKNNLVEEVVNLLKIGYNKYGTSMQALGYKEIVEYLNGEISLEEAVEKIKKGTRRYAKRQITWFKAYDFIKWFFVDDYKTYEELRENIFEYLAGKLKF.

ATP is bound at residue 10–17 (GPTATGKS). Substrate is bound at residue 12–17 (TATGKS). The segment at 35 to 38 (DSMQ) is interaction with substrate tRNA.

It belongs to the IPP transferase family. As to quaternary structure, monomer. Mg(2+) serves as cofactor.

It catalyses the reaction adenosine(37) in tRNA + dimethylallyl diphosphate = N(6)-dimethylallyladenosine(37) in tRNA + diphosphate. In terms of biological role, catalyzes the transfer of a dimethylallyl group onto the adenine at position 37 in tRNAs that read codons beginning with uridine, leading to the formation of N6-(dimethylallyl)adenosine (i(6)A). This is tRNA dimethylallyltransferase from Caldanaerobacter subterraneus subsp. tengcongensis (strain DSM 15242 / JCM 11007 / NBRC 100824 / MB4) (Thermoanaerobacter tengcongensis).